Consider the following 197-residue polypeptide: Imidazoleglycerol-phosphate dehydratase (197 aa).

It belongs to the imidazoleglycerol-phosphate dehydratase family.

It localises to the cytoplasm. It catalyses the reaction D-erythro-1-(imidazol-4-yl)glycerol 3-phosphate = 3-(imidazol-4-yl)-2-oxopropyl phosphate + H2O. Its pathway is amino-acid biosynthesis; L-histidine biosynthesis; L-histidine from 5-phospho-alpha-D-ribose 1-diphosphate: step 6/9. This chain is Imidazoleglycerol-phosphate dehydratase, found in Chromobacterium violaceum (strain ATCC 12472 / DSM 30191 / JCM 1249 / CCUG 213 / NBRC 12614 / NCIMB 9131 / NCTC 9757 / MK).